A 156-amino-acid chain; its full sequence is Protein US1 (156 aa).

Disordered stretches follow at residues 90–114 (RSRSRTAESGRSSSSSSVSVLSDGD) and 133–156 (ARRWTQRHDSEERASQQAKNDSTS). Residues 96 to 111 (AESGRSSSSSSVSVLS) show a composition bias toward low complexity. A compositionally biased stretch (polar residues) spans 147 to 156 (SQQAKNDSTS).

This is Protein US1 (US1) from Homo sapiens (Human).